The following is a 503-amino-acid chain: Glycerol kinase (503 aa).

Thr14 contributes to the ADP binding site. ATP-binding residues include Thr14, Thr15, and Ser16. Thr14 provides a ligand contact to sn-glycerol 3-phosphate. Arg18 contacts ADP. Residues Arg84, Glu85, Tyr136, and Asp246 each coordinate sn-glycerol 3-phosphate. The glycerol site is built by Arg84, Glu85, Tyr136, Asp246, and Gln247. ADP-binding residues include Thr268 and Gly311. Thr268, Gly311, Gln315, and Gly412 together coordinate ATP. Residues Gly412 and Asn416 each coordinate ADP.

This sequence belongs to the FGGY kinase family.

It carries out the reaction glycerol + ATP = sn-glycerol 3-phosphate + ADP + H(+). The protein operates within polyol metabolism; glycerol degradation via glycerol kinase pathway; sn-glycerol 3-phosphate from glycerol: step 1/1. With respect to regulation, inhibited by fructose 1,6-bisphosphate (FBP). In terms of biological role, key enzyme in the regulation of glycerol uptake and metabolism. Catalyzes the phosphorylation of glycerol to yield sn-glycerol 3-phosphate. This is Glycerol kinase from Haemophilus influenzae (strain PittGG).